The following is a 335-amino-acid chain: Ubiquinol oxidase 1b, mitochondrial (335 aa).

The transit peptide at 1-47 directs the protein to the mitochondrion; that stretch reads MSSRMAGATLLRHLGPRLFAAEPVYSGLAASARGVMPAAARIFPARM. The chain crosses the membrane as a helical span at residues 160–180; the sequence is ALLLETVAGVPGMVGGMLLHL. The Fe cation site is built by E164, E203, and H206. The helical transmembrane segment at 222–242 threads the bilayer; that stretch reads ALVLAAQGVFFNAYFVGYLVS. Residues E254, E305, and H308 each contribute to the Fe cation site.

It belongs to the alternative oxidase family. Requires Fe cation as cofactor.

The protein localises to the mitochondrion inner membrane. It carries out the reaction 2 a ubiquinol + O2 = 2 a ubiquinone + 2 H2O. In terms of biological role, catalyzes the cyanide-resistant oxidation of ubiquinol and the reduction of molecular oxygen to water, but does not translocate protons and consequently is not linked to oxidative phosphorylation. May increase respiration when the cytochrome respiratory pathway is restricted, or in response to low temperatures. In Oryza sativa subsp. japonica (Rice), this protein is Ubiquinol oxidase 1b, mitochondrial.